A 196-amino-acid chain; its full sequence is Probable malonic semialdehyde reductase RutE (196 aa).

The protein belongs to the nitroreductase family. HadB/RutE subfamily. Requires FMN as cofactor.

It catalyses the reaction 3-hydroxypropanoate + NADP(+) = 3-oxopropanoate + NADPH + H(+). Functionally, may reduce toxic product malonic semialdehyde to 3-hydroxypropionic acid, which is excreted. The chain is Probable malonic semialdehyde reductase RutE from Escherichia coli O45:K1 (strain S88 / ExPEC).